A 105-amino-acid chain; its full sequence is V-type ATP synthase subunit F (105 aa).

This sequence belongs to the V-ATPase F subunit family.

In terms of biological role, produces ATP from ADP in the presence of a proton gradient across the membrane. The protein is V-type ATP synthase subunit F of Clostridium perfringens (strain 13 / Type A).